Consider the following 352-residue polypeptide: Phosphoribosylformylglycinamidine cyclo-ligase (352 aa).

It belongs to the AIR synthase family.

The protein resides in the cytoplasm. The catalysed reaction is 2-formamido-N(1)-(5-O-phospho-beta-D-ribosyl)acetamidine + ATP = 5-amino-1-(5-phospho-beta-D-ribosyl)imidazole + ADP + phosphate + H(+). It functions in the pathway purine metabolism; IMP biosynthesis via de novo pathway; 5-amino-1-(5-phospho-D-ribosyl)imidazole from N(2)-formyl-N(1)-(5-phospho-D-ribosyl)glycinamide: step 2/2. In Hahella chejuensis (strain KCTC 2396), this protein is Phosphoribosylformylglycinamidine cyclo-ligase.